A 257-amino-acid chain; its full sequence is Imidazole glycerol phosphate synthase subunit HisF (257 aa).

Residues Asp-11 and Asp-130 contribute to the active site.

The protein belongs to the HisA/HisF family. As to quaternary structure, heterodimer of HisH and HisF.

The protein localises to the cytoplasm. The enzyme catalyses 5-[(5-phospho-1-deoxy-D-ribulos-1-ylimino)methylamino]-1-(5-phospho-beta-D-ribosyl)imidazole-4-carboxamide + L-glutamine = D-erythro-1-(imidazol-4-yl)glycerol 3-phosphate + 5-amino-1-(5-phospho-beta-D-ribosyl)imidazole-4-carboxamide + L-glutamate + H(+). It functions in the pathway amino-acid biosynthesis; L-histidine biosynthesis; L-histidine from 5-phospho-alpha-D-ribose 1-diphosphate: step 5/9. Its function is as follows. IGPS catalyzes the conversion of PRFAR and glutamine to IGP, AICAR and glutamate. The HisF subunit catalyzes the cyclization activity that produces IGP and AICAR from PRFAR using the ammonia provided by the HisH subunit. The sequence is that of Imidazole glycerol phosphate synthase subunit HisF from Shewanella sp. (strain W3-18-1).